A 521-amino-acid polypeptide reads, in one-letter code: Envelope glycoprotein (521 aa).

Residues 1 to 20 (MVDSTIRLVATIFLISLTQQ) form the signal peptide. N-linked (GlcNAc...) asparagine; by host glycosylation is found at asparagine 44, asparagine 158, asparagine 189, and asparagine 396. Residues 501-517 (ISWVVVIGVVLVGVCLM) form a helical membrane-spanning segment.

In terms of assembly, homooligomer; disulfide-linked (possibly homodimer).

Its subcellular location is the virion membrane. Its function is as follows. Attaches the virus to host cellular receptor and later induces fusion of virion with host membrane. This is Envelope glycoprotein (P4) from Dhori virus (strain Indian/1313/61) (Dho).